The primary structure comprises 1214 residues: Inner capsid protein VP3 (1214 aa).

The disordered stretch occupies residues 1–80; the sequence is MPRRSARKAQ…SVNNDGDIIT (80 aa). A compositionally biased stretch (polar residues) spans 8–18; it reads KAQSATASPAD. Residues 28 to 51 show a composition bias toward low complexity; sequence PTTNSPPSTTSPNQAAADANQQQA. The segment at 117-140 adopts a C2H2-type zinc-finger fold; the sequence is YVCNVCNARFSTMSALSEHLRSDH.

The protein belongs to the turreted BTV-fold inner capsid family. As to quaternary structure, homodecamer; each decamer is made up of two conformers of VP2, called VP2A and VP2B. 12 homodecamers assemble to form an icosahedral capsid. Interacts with VP6.

It localises to the virion. Inner capsid protein that self-assembles to form an icosahedral capsid with a T=2 symmetry, which consists of 120 copies of VP2, with channels at each of its five-fold vertices. This capsid constitutes the innermost concentric layer of the viral mature particle. This is Inner capsid protein VP3 (S3) from Notemigonus crysoleucas (Golden shiner).